The primary structure comprises 418 residues: UDP-N-acetylglucosamine 1-carboxyvinyltransferase (418 aa).

A phosphoenolpyruvate-binding site is contributed by K23 to N24. Residue R93 participates in UDP-N-acetyl-alpha-D-glucosamine binding. Catalysis depends on D117, which acts as the Proton donor. Residues D305 and V327 each coordinate UDP-N-acetyl-alpha-D-glucosamine.

The protein belongs to the EPSP synthase family. MurA subfamily.

The protein resides in the cytoplasm. It catalyses the reaction phosphoenolpyruvate + UDP-N-acetyl-alpha-D-glucosamine = UDP-N-acetyl-3-O-(1-carboxyvinyl)-alpha-D-glucosamine + phosphate. It functions in the pathway cell wall biogenesis; peptidoglycan biosynthesis. Its function is as follows. Cell wall formation. Adds enolpyruvyl to UDP-N-acetylglucosamine. The polypeptide is UDP-N-acetylglucosamine 1-carboxyvinyltransferase (Mycobacterium leprae (strain TN)).